The following is a 206-amino-acid chain: Cytidylate kinase (206 aa).

9-17 (GPAAAGKGT) provides a ligand contact to ATP.

It belongs to the cytidylate kinase family. Type 1 subfamily.

The protein localises to the cytoplasm. The catalysed reaction is CMP + ATP = CDP + ADP. The enzyme catalyses dCMP + ATP = dCDP + ADP. In Cereibacter sphaeroides (strain ATCC 17023 / DSM 158 / JCM 6121 / CCUG 31486 / LMG 2827 / NBRC 12203 / NCIMB 8253 / ATH 2.4.1.) (Rhodobacter sphaeroides), this protein is Cytidylate kinase.